The primary structure comprises 325 residues: Isoaspartyl peptidase/L-asparaginase (325 aa).

The active-site Nucleophile is the T193. Substrate contacts are provided by residues 221-224 and 243-246; these read RIGD and TGKG.

The protein belongs to the Ntn-hydrolase family. As to quaternary structure, heterotetramer of two alpha and two beta chains arranged as a dimer of alpha/beta heterodimers. Cleaved into an alpha and beta chain by autocatalysis; this activates the enzyme. The N-terminal residue of the beta subunit is responsible for the nucleophile hydrolase activity. As to expression, developing seeds.

It catalyses the reaction Cleavage of a beta-linked Asp residue from the N-terminus of a polypeptide.. In terms of biological role, acts in asparagine catabolism but also in the final steps of protein degradation via hydrolysis of a range of isoaspartyl dipeptides. The chain is Isoaspartyl peptidase/L-asparaginase from Lupinus angustifolius (Narrow-leaved blue lupine).